Here is a 499-residue protein sequence, read N- to C-terminus: Putative hydrolase YuaR (499 aa).

The first 26 residues, 1-26 (MRVIMKPLRRTLVFFIFSVFLCGTVS), serve as a signal peptide directing secretion. One can recognise an AB hydrolase-1 domain in the interval 94 to 393 (GSVIIISGGP…DAFPAVNFER (300 aa)). S207 serves as the catalytic Nucleophile. Residue D433 is part of the active site. H460 functions as the Proton donor in the catalytic mechanism.

The protein belongs to the peptidase S33 family.

This is Putative hydrolase YuaR (yuaR) from Escherichia coli (strain K12).